The chain runs to 436 residues: Arginine biosynthesis bifunctional protein ArgJ, mitochondrial (436 aa).

Substrate is bound by residues threonine 172, lysine 198, threonine 209, glutamate 298, asparagine 431, and serine 436. Residue threonine 209 is the Nucleophile of the active site.

Belongs to the ArgJ family. Heterodimer of an alpha and a beta chain. In terms of processing, the alpha and beta chains are autoproteolytically processed from a single precursor protein within the mitochondrion.

It is found in the mitochondrion matrix. The catalysed reaction is N(2)-acetyl-L-ornithine + L-glutamate = N-acetyl-L-glutamate + L-ornithine. It carries out the reaction L-glutamate + acetyl-CoA = N-acetyl-L-glutamate + CoA + H(+). It participates in amino-acid biosynthesis; L-arginine biosynthesis; L-ornithine and N-acetyl-L-glutamate from L-glutamate and N(2)-acetyl-L-ornithine (cyclic): step 1/1. The protein operates within amino-acid biosynthesis; L-arginine biosynthesis; N(2)-acetyl-L-ornithine from L-glutamate: step 1/4. Catalyzes two activities which are involved in the cyclic version of arginine biosynthesis: the synthesis of acetylglutamate from glutamate and acetyl-CoA, and of ornithine by transacetylation between acetylornithine and glutamate. The polypeptide is Arginine biosynthesis bifunctional protein ArgJ, mitochondrial (Meyerozyma guilliermondii (strain ATCC 6260 / CBS 566 / DSM 6381 / JCM 1539 / NBRC 10279 / NRRL Y-324) (Yeast)).